Reading from the N-terminus, the 853-residue chain is DNA (cytosine-5)-methyltransferase 3B (853 aa).

Over residues 1–20 (MKGDTRHLNGEEDAGGREDS) the composition is skewed to basic and acidic residues. The interval 1-218 (MKGDTRHLNG…SGDGDSSEYQ (218 aa)) is disordered. Residues 1–298 (MKGDTRHLNG…LATFNKLVSY (298 aa)) form an interaction with DNMT1 and DNMT3A region. The segment covering 72-81 (GDGDGEDGDG) has biased composition (acidic residues). Residue Ser-82 is modified to Phosphoserine. Residue Lys-89 forms a Glycyl lysine isopeptide (Lys-Gly) (interchain with G-Cter in SUMO2) linkage. Position 96 is a phosphothreonine (Thr-96). Phosphoserine is present on residues Ser-100 and Ser-110. The span at 115-130 (ERHRPSPRSTRGRQGR) shows a compositional bias: basic residues. A phosphoserine mark is found at Ser-136, Ser-195, Ser-202, and Ser-209. The segment covering 179–199 (GTPQSSSTPYARLAQDSQQGG) has biased composition (polar residues). Residues 225 to 283 (IGDLVWGKIKGFSWWPAMVVSWKATSKRQAMSGMRWVQWFGDGKFSEVSADKLVALGLF) form the PWWP domain. Residues 341–423 (KPTGIEGLKP…DQSREQMASD (83 aa)) form a disordered region. 2 stretches are compositionally biased toward basic and acidic residues: residues 368–385 (RKLESRKYENKTRRRTAD) and 407–417 (GKDRGDEDQSR). The residue at position 410 (Arg-410) is a Citrulline. An ADD domain is found at 423–555 (DVANNKSSLE…LQAFFTSDTG (133 aa)). A GATA-type; atypical zinc finger spans residues 434-464 (GCLSCGRKNPVSFHPLFEGGLCQTCRDRFLE). The segment at 435-527 (CLSCGRKNPV…LQEPWSCYMC (93 aa)) is interaction with the PRC2/EED-EZH2 complex. The PHD-type; atypical zinc finger occupies 475 to 531 (QSYCTVCCEGRELLLCSNTSCCRCFCVECLEVLVGTGTAAEAKLQEPWSCYMCLPQR). Residues 575 to 853 (IRVLSLFDGI…APLKDYFACE (279 aa)) enclose the SAM-dependent MTase C5-type domain. S-adenosyl-L-methionine contacts are provided by residues 582–586 (DGIAT) and Glu-605. A Glycyl lysine isopeptide (Lys-Gly) (interchain with G-Cter in SUMO2) cross-link involves residue Lys-617. 627–629 (DVR) is an S-adenosyl-L-methionine binding site. The active site involves Cys-651. 832 to 834 (RSW) lines the S-adenosyl-L-methionine pocket.

It belongs to the class I-like SAM-binding methyltransferase superfamily. C5-methyltransferase family. As to quaternary structure, interacts with BAZ2A/TIP5, SUV39H1 and CBX4. Interacts with UHRF1. Interacts with DNMT1 and DNMT3A, SETDB1, UBL1, UBE2I9 and ZHX1. Interacts with the PRC2/EED-EZH2 complex. In terms of processing, sumoylated. Citrullinated by PADI4. Ubiquitous; highly expressed in fetal liver, heart, kidney, placenta, and at lower levels in spleen, colon, brain, liver, small intestine, lung, peripheral blood mononuclear cells, and skeletal muscle. Isoform 1 is expressed in all tissues except brain, skeletal muscle and PBMC, 3 is ubiquitous, 4 is expressed in all tissues except brain, skeletal muscle, lung and prostate and 5 is detectable only in testis and at very low level in brain and prostate.

It localises to the nucleus. The catalysed reaction is a 2'-deoxycytidine in DNA + S-adenosyl-L-methionine = a 5-methyl-2'-deoxycytidine in DNA + S-adenosyl-L-homocysteine + H(+). With respect to regulation, activated by binding to the regulatory factor DNMT3L. Functionally, required for genome-wide de novo methylation and is essential for the establishment of DNA methylation patterns during development. DNA methylation is coordinated with methylation of histones. May preferentially methylates nucleosomal DNA within the nucleosome core region. May function as transcriptional co-repressor by associating with CBX4 and independently of DNA methylation. Seems to be involved in gene silencing. In association with DNMT1 and via the recruitment of CTCFL/BORIS, involved in activation of BAG1 gene expression by modulating dimethylation of promoter histone H3 at H3K4 and H3K9. Isoforms 4 and 5 are probably not functional due to the deletion of two conserved methyltransferase motifs. Functions as a transcriptional corepressor by associating with ZHX1. Required for DUX4 silencing in somatic cells. The polypeptide is DNA (cytosine-5)-methyltransferase 3B (DNMT3B) (Homo sapiens (Human)).